We begin with the raw amino-acid sequence, 505 residues long: Cobyric acid synthase (505 aa).

Positions 260–453 constitute a GATase cobBQ-type domain; it reads RIAVAAIYFP…FHGIIDEPEV (194 aa). C341 acts as the Nucleophile in catalysis. H445 is an active-site residue.

This sequence belongs to the CobB/CobQ family. CobQ subfamily.

It participates in cofactor biosynthesis; adenosylcobalamin biosynthesis. Functionally, catalyzes amidations at positions B, D, E, and G on adenosylcobyrinic A,C-diamide. NH(2) groups are provided by glutamine, and one molecule of ATP is hydrogenolyzed for each amidation. In Chlorobium phaeobacteroides (strain DSM 266 / SMG 266 / 2430), this protein is Cobyric acid synthase.